The following is a 244-amino-acid chain: 5-oxoprolinase subunit A (244 aa).

This sequence belongs to the LamB/PxpA family. As to quaternary structure, forms a complex composed of PxpA, PxpB and PxpC.

The enzyme catalyses 5-oxo-L-proline + ATP + 2 H2O = L-glutamate + ADP + phosphate + H(+). Functionally, catalyzes the cleavage of 5-oxoproline to form L-glutamate coupled to the hydrolysis of ATP to ADP and inorganic phosphate. The polypeptide is 5-oxoprolinase subunit A (Salmonella typhimurium (strain LT2 / SGSC1412 / ATCC 700720)).